The sequence spans 323 residues: Magnesium transporter NIPA1 (323 aa).

The Extracellular segment spans residues 1–21; the sequence is MGTAAAAAAAGEGARGPSPAA. The helical transmembrane segment at 22-42 threads the bilayer; the sequence is VSLGLGVAVVSSLVNGSTFVL. The Cytoplasmic segment spans residues 43 to 60; that stretch reads QKKGIVRAKRRGTSYLTD. Residues 61-81 traverse the membrane as a helical segment; it reads IVWWAGTIAMAVGQIGNFLAY. Thr-82 is a topological domain (extracellular). A helical transmembrane segment spans residues 83-103; sequence AVPTVLVTPLGALGVPFGSIL. The Cytoplasmic segment spans residues 104–111; sequence ASYLLKEK. A helical transmembrane segment spans residues 112-132; sequence LNILGKLGCLLSCAGSVVLII. Topologically, residues 133–153 are extracellular; sequence HSPKSESVTTQAELEEKLTNP. Residues 154–174 traverse the membrane as a helical segment; the sequence is VFVGYLCIVLLMLLLLIFWIA. At 175-177 the chain is on the cytoplasmic side; that stretch reads PAH. Residues 178–198 traverse the membrane as a helical segment; the sequence is GPTNIMVYISICSLLGSFTVP. The Extracellular portion of the chain corresponds to 199 to 218; sequence STKGIGLAAQDILHNNPSSQ. The chain crosses the membrane as a helical span at residues 219–239; it reads RALCLCLVLLAVLGCSIIVQF. The Cytoplasmic segment spans residues 240–253; that stretch reads RYINKALECFDSSV. Residues 254–274 form a helical membrane-spanning segment; that stretch reads FGAIYYVVFTTLVLLASAILF. Residues 275–284 lie on the Extracellular side of the membrane; it reads REWSNVGLVD. Residues 285–305 form a helical membrane-spanning segment; that stretch reads FLGMACGFTTVSVGIVLIQVF. Residues 306-323 lie on the Cytoplasmic side of the membrane; the sequence is KEFNFNLGEMNKSNMKTD.

The protein belongs to the NIPA family. As to quaternary structure, homodimer. In terms of tissue distribution, widely expressed. Predominantly expressed in neuronal tissues. Brain, heart, kidney, liver and colon (at protein level).

It is found in the cell membrane. The protein resides in the early endosome. It catalyses the reaction Mg(2+)(in) = Mg(2+)(out). Functionally, acts as a Mg(2+) transporter. Can also transport other divalent cations such as Fe(2+), Sr(2+), Ba(2+), Zn(2+) and Co(2+) but to a much less extent than Mg(2+). This is Magnesium transporter NIPA1 (Nipa1) from Mus musculus (Mouse).